The following is a 382-amino-acid chain: Alanine racemase 1 (382 aa).

Lys-39 serves as the catalytic Proton acceptor; specific for D-alanine. The residue at position 39 (Lys-39) is an N6-(pyridoxal phosphate)lysine. Position 138 (Arg-138) interacts with substrate. The Proton acceptor; specific for L-alanine role is filled by Tyr-265. Met-312 is a binding site for substrate.

The protein belongs to the alanine racemase family. Pyridoxal 5'-phosphate is required as a cofactor.

It carries out the reaction L-alanine = D-alanine. It participates in amino-acid biosynthesis; D-alanine biosynthesis; D-alanine from L-alanine: step 1/1. Functionally, catalyzes the interconversion of L-alanine and D-alanine. May also act on other amino acids. The protein is Alanine racemase 1 (alr1) of Staphylococcus aureus (strain N315).